A 270-amino-acid chain; its full sequence is Thymidylate synthase (270 aa).

Residues arginine 28 and 133 to 134 (RR) contribute to the dUMP site. Cysteine 153 (nucleophile) is an active-site residue. DUMP-binding positions include 173-176 (RSAD), asparagine 184, and 214-216 (HIY). Aspartate 176 contacts (6R)-5,10-methylene-5,6,7,8-tetrahydrofolate. Alanine 269 serves as a coordination point for (6R)-5,10-methylene-5,6,7,8-tetrahydrofolate.

It belongs to the thymidylate synthase family. Bacterial-type ThyA subfamily. Homodimer.

It is found in the cytoplasm. It catalyses the reaction dUMP + (6R)-5,10-methylene-5,6,7,8-tetrahydrofolate = 7,8-dihydrofolate + dTMP. It participates in pyrimidine metabolism; dTTP biosynthesis. Functionally, catalyzes the reductive methylation of 2'-deoxyuridine-5'-monophosphate (dUMP) to 2'-deoxythymidine-5'-monophosphate (dTMP) while utilizing 5,10-methylenetetrahydrofolate (mTHF) as the methyl donor and reductant in the reaction, yielding dihydrofolate (DHF) as a by-product. This enzymatic reaction provides an intracellular de novo source of dTMP, an essential precursor for DNA biosynthesis. The chain is Thymidylate synthase from Corynebacterium diphtheriae (strain ATCC 700971 / NCTC 13129 / Biotype gravis).